The following is a 471-amino-acid chain: Glutamate--tRNA ligase (471 aa).

The short motif at P9 to G19 is the 'HIGH' region element. Positions 98, 100, 125, and 127 each coordinate Zn(2+). The short motif at K237–R241 is the 'KMSKS' region element. K240 provides a ligand contact to ATP.

The protein belongs to the class-I aminoacyl-tRNA synthetase family. Glutamate--tRNA ligase type 1 subfamily. Monomer. Zn(2+) is required as a cofactor.

The protein localises to the cytoplasm. It catalyses the reaction tRNA(Glu) + L-glutamate + ATP = L-glutamyl-tRNA(Glu) + AMP + diphosphate. Its function is as follows. Catalyzes the attachment of glutamate to tRNA(Glu) in a two-step reaction: glutamate is first activated by ATP to form Glu-AMP and then transferred to the acceptor end of tRNA(Glu). This is Glutamate--tRNA ligase from Citrobacter koseri (strain ATCC BAA-895 / CDC 4225-83 / SGSC4696).